Consider the following 348-residue polypeptide: Dihydroorotase (348 aa).

Residues His17 and His19 each contribute to the Zn(2+) site. Residues 19–21 and Asn45 each bind substrate; that span reads HLR. 3 residues coordinate Zn(2+): Lys103, His140, and His178. Lys103 carries the post-translational modification N6-carboxylysine. His140 contacts substrate. Leu223 serves as a coordination point for substrate. Residue Asp251 coordinates Zn(2+). The active site involves Asp251. 2 residues coordinate substrate: His255 and Ala267.

It belongs to the metallo-dependent hydrolases superfamily. DHOase family. Class II DHOase subfamily. In terms of assembly, homodimer. Zn(2+) is required as a cofactor.

It carries out the reaction (S)-dihydroorotate + H2O = N-carbamoyl-L-aspartate + H(+). Its pathway is pyrimidine metabolism; UMP biosynthesis via de novo pathway; (S)-dihydroorotate from bicarbonate: step 3/3. Catalyzes the reversible cyclization of carbamoyl aspartate to dihydroorotate. This is Dihydroorotase from Klebsiella pneumoniae (strain 342).